We begin with the raw amino-acid sequence, 88 residues long: Small ribosomal subunit protein uS17 (88 aa).

The protein belongs to the universal ribosomal protein uS17 family. As to quaternary structure, part of the 30S ribosomal subunit.

In terms of biological role, one of the primary rRNA binding proteins, it binds specifically to the 5'-end of 16S ribosomal RNA. This chain is Small ribosomal subunit protein uS17, found in Oenococcus oeni (strain ATCC BAA-331 / PSU-1).